We begin with the raw amino-acid sequence, 2032 residues long: Cytoskeleton-associated protein 5 (2032 aa).

TOG stretches follow at residues 1–223 (MGDD…KLPT) and 268–502 (YELL…LIHG). Lys-48 is subject to N6-acetyllysine. HEAT repeat units lie at residues 159-197 (IILLKPIIKVLPKLFESREKAVRDEAKLIAVEIYRWIRD), 356-394 (GQYAGHVVPTILEKFKEKKPQVVQALQEAIDAIFLTTTL), and 434-472 (KSLLKPFCAALLKHINDSAPEVRDAAFEALGTALKVVGE). The disordered stretch occupies residues 516 to 579 (PLPGRTAASG…GTKNKKGLET (64 aa)). A compositionally biased stretch (low complexity) spans 543 to 554 (LKKAPAAKAGGP). Residues 588 to 817 (SIEVCEEKAS…EFEKMQGQSP (230 aa)) are TOG 3. The HEAT 4 repeat unit spans residues 750-788 (GLNVKAFISNVKTALAATNPAVRTAAITLLGVMYLYVGP). The tract at residues 811-851 (KMQGQSPPAPTRGISKHSTSGTDEGEDGDEPDDGSNDVVDL) is disordered. Ser-816 and Ser-845 each carry phosphoserine. The segment covering 833 to 845 (DEGEDGDEPDDGS) has biased composition (acidic residues). TOG regions lie at residues 853-1081 (PRTE…VNMP) and 1193-1428 (IEQL…KRPS). HEAT repeat units lie at residues 855-893 (TEISDKITSELVSKIGDKNWKIRKEGLDEVAGIINDAKF), 936-974 (KQHVKNLGIPIITVLGDSKNNVRAAALATVNAWAEQTGM), and 1013-1051 (PTDLILCVPHLYSCLEDRNGDVRKKAQDALPFFMMHLGY). Residues 1077 to 1160 (KVNMPAKPAP…KEDEDKSGPI (84 aa)) form a disordered region. HEAT repeat units follow at residues 1284 to 1322 (ENEASSFIPYLVVKVGEPKDVIRKDVRAILNRMCLVYPA), 1324 to 1357 (KMFPFIMEGTKSKNSKQRAECLEELGCLVESYGM), and 1361 to 1399 (QPTPGKALKEIAVHIGDRDNAVRNAALNTIVTVYNVHGD). Residues 1422-1443 (RSAKRPSAAPIKQVEEKPQRAQ) form a disordered region. Ser-1469 is subject to Phosphoserine. Residues 1801-1822 (SMDQTGSKSDKETEKGASRIDE) form a disordered region. Residues 1808–1822 (KSDKETEKGASRIDE) show a composition bias toward basic and acidic residues. Ser-1861 carries the phosphoserine modification. Residues 1932 to 1957 (PSVYLERLKILRQRCGLDNTKQDDRP) form an interaction with TACC3 region. Residues 1949–2032 (DNTKQDDRPP…RLERIKSSRK (84 aa)) are disordered. Over residues 1971 to 1983 (VASSTDMLHSKLS) the composition is skewed to polar residues. The segment covering 1984–1997 (QLRESREQHQHSDL) has biased composition (basic and acidic residues). A compositionally biased stretch (low complexity) spans 2002-2014 (THSSGTVTSSSST). Residues 2018–2032 (DDLKKRLERIKSSRK) are compositionally biased toward basic and acidic residues.

This sequence belongs to the TOG/XMAP215 family. As to quaternary structure, interacts with TACC1. Interacts with SLAIN2 and SLAIN1. Interacts with HNRNPA2B1. Interacts with TACC3 independently of clathrin. Interacts with TACC3 and clathrin forming the TACC3/ch-TOG/clathrin complex located at spindle inter-microtubules bridges. Interacts with NDC80; indicative for an association with the NDC80 complex. Overexpressed in hepatomas and colonic tumors. Also expressed in skeletal muscle, brain, heart, placenta, lung, liver, kidney and pancreas. Expression is elevated in the brain; highly expressed in the Purkinje cell bodies of the cerebellum.

Its subcellular location is the cytoplasm. It localises to the cytoskeleton. It is found in the microtubule organizing center. The protein resides in the centrosome. The protein localises to the spindle pole. Its subcellular location is the spindle. It localises to the chromosome. It is found in the centromere. The protein resides in the kinetochore. Functionally, binds to the plus end of microtubules and regulates microtubule dynamics and microtubule organization. Acts as a processive microtubule polymerase. Promotes cytoplasmic microtubule nucleation and elongation. Plays a major role in organizing spindle poles. In spindle formation protects kinetochore microtubules from depolymerization by KIF2C and has an essential role in centrosomal microtubule assembly independently of KIF2C activity. Contributes to centrosome integrity. Acts as a component of the TACC3/ch-TOG/clathrin complex proposed to contribute to stabilization of kinetochore fibers of the mitotic spindle by acting as inter-microtubule bridge. The TACC3/ch-TOG/clathrin complex is required for the maintenance of kinetochore fiber tension. Enhances the strength of NDC80 complex-mediated kinetochore-tip microtubule attachments. In Homo sapiens (Human), this protein is Cytoskeleton-associated protein 5 (CKAP5).